The primary structure comprises 217 residues: Probable coenzyme A transferase subunit beta (217 aa).

The active site involves E50.

It belongs to the 3-oxoacid CoA-transferase subunit B family. As to quaternary structure, heterodimer of a subunit alpha and a subunit beta.

The sequence is that of Probable coenzyme A transferase subunit beta (yodR) from Bacillus subtilis (strain 168).